Reading from the N-terminus, the 739-residue chain is MGASVLAMAARGGHTHTVKLLLENGAFVDDCEHACVSEGNTNTHCSAGSVQEARALLEVRALLAAAQHGQGAAVALLLDWGSDARVCHTGTGWSALMLAAAGGSLSVCQQLVERGADPDHTNVLGNTALEVALQLRRRDVQKYLDNITSVRPRPDDEKKRPDVFHALKLGNAQLVKEIVEQDAAQVDVCNADGASPLMMAAVSGQLEVVQLLVEKRADVDRQDSVHGWTALMQATYHGNKEVVKFLLSQGADVQLRAKNGYTAFDLVMLLNDPDTELVRLLASVCMLVDKDKSKQRGKSALRRRASAGTPSPPEDKTGLKSWWNRMSNRFRRLKLTHTLRHGLSTNRLAPFPDAADVPLDATMRAEEGGAEVASPTAPPAGAQSTACSRTEDCGLNGTGSGKEDFLITTMLRNGAPLARLPSEQLKAVIPPFLPPSCFEPWSSERCGSLRDARSTHTHSQRPGRSSAGSDTASISRVVNRSIKFPSITKGPSPSNSGSYNSAHSSGGSNGVGGVNRHSDTHNRSGGSAADSVLSQIAAQRKRAAGLMDSRSPAVETPSPAHTPLPDSRPKLELQKRPQSGNSSRSKSTSPTLTPSPSPTPAHTPAPAHTPAHRPTGASADSQGSASTQQRSRSSGGSSSGTITDEDELSGILRKLSLEKYQPIFEEQEVDMEAFLTLTDGDLQELGIRTDGPRQQILAAISELNAGKGRERQILQETIINFQSSFGSSASTPRAATHTH.

8 ANK repeats span residues 1–30 (MGAS…FVDD), 57–86 (LEVR…DARV), 91–120 (TGWS…DPDH), 124–156 (LGNT…RPDD), 158–188 (KKRP…QVDV), 192–221 (DGAS…DVDR), 226–255 (HGWT…DVQL), and 259–290 (NGYT…LVDK). Residues 295 to 305 (QRGKSALRRRA) are compositionally biased toward basic residues. Disordered regions lie at residues 295 to 320 (QRGK…TGLK) and 449 to 645 (LRDA…ITDE). The segment covering 462 to 478 (PGRSSAGSDTASISRVV) has biased composition (polar residues). 2 stretches are compositionally biased toward low complexity: residues 490–506 (GPSP…HSSG) and 582–592 (SSRSKSTSPTL). The span at 593–603 (TPSPSPTPAHT) shows a compositional bias: pro residues. Over residues 604–641 (PAPAHTPAHRPTGASADSQGSASTQQRSRSSGGSSSGT) the composition is skewed to low complexity. The 64-residue stretch at 643-706 (TDEDELSGIL…LAAISELNAG (64 aa)) folds into the SAM domain.

The protein localises to the cell projection. It is found in the cilium. Required for renal function. In Danio rerio (Zebrafish), this protein is Ankyrin repeat and SAM domain-containing protein 6 (anks6).